The sequence spans 140 residues: Nucleoside diphosphate kinase (140 aa).

Residues K11, F59, R87, T93, R104, and N114 each coordinate ATP. Residue H117 is the Pros-phosphohistidine intermediate of the active site.

Belongs to the NDK family. As to quaternary structure, homotetramer. Mg(2+) is required as a cofactor.

The protein resides in the cytoplasm. It carries out the reaction a 2'-deoxyribonucleoside 5'-diphosphate + ATP = a 2'-deoxyribonucleoside 5'-triphosphate + ADP. It catalyses the reaction a ribonucleoside 5'-diphosphate + ATP = a ribonucleoside 5'-triphosphate + ADP. Functionally, major role in the synthesis of nucleoside triphosphates other than ATP. The ATP gamma phosphate is transferred to the NDP beta phosphate via a ping-pong mechanism, using a phosphorylated active-site intermediate. The protein is Nucleoside diphosphate kinase of Rhodospirillum rubrum (strain ATCC 11170 / ATH 1.1.1 / DSM 467 / LMG 4362 / NCIMB 8255 / S1).